The chain runs to 426 residues: Serine--tRNA ligase (426 aa).

An L-serine-binding site is contributed by 233–235 (TAE). 264 to 266 (RSE) is a binding site for ATP. Glu287 lines the L-serine pocket. Residue 351–354 (EISS) coordinates ATP. Residue Ser387 participates in L-serine binding.

Belongs to the class-II aminoacyl-tRNA synthetase family. Type-1 seryl-tRNA synthetase subfamily. In terms of assembly, homodimer. The tRNA molecule binds across the dimer.

It is found in the cytoplasm. The catalysed reaction is tRNA(Ser) + L-serine + ATP = L-seryl-tRNA(Ser) + AMP + diphosphate + H(+). It carries out the reaction tRNA(Sec) + L-serine + ATP = L-seryl-tRNA(Sec) + AMP + diphosphate + H(+). The protein operates within aminoacyl-tRNA biosynthesis; selenocysteinyl-tRNA(Sec) biosynthesis; L-seryl-tRNA(Sec) from L-serine and tRNA(Sec): step 1/1. Catalyzes the attachment of serine to tRNA(Ser). Is also able to aminoacylate tRNA(Sec) with serine, to form the misacylated tRNA L-seryl-tRNA(Sec), which will be further converted into selenocysteinyl-tRNA(Sec). This is Serine--tRNA ligase from Clostridium botulinum (strain Okra / Type B1).